The sequence spans 417 residues: Serine hydroxymethyltransferase 2 (417 aa).

Residues Leu-121 and 125–127 (GHL) contribute to the (6S)-5,6,7,8-tetrahydrofolate site. Lys-230 bears the N6-(pyridoxal phosphate)lysine mark. (6S)-5,6,7,8-tetrahydrofolate is bound at residue 355–357 (SPF).

Belongs to the SHMT family. As to quaternary structure, homodimer. The cofactor is pyridoxal 5'-phosphate.

Its subcellular location is the cytoplasm. The catalysed reaction is (6R)-5,10-methylene-5,6,7,8-tetrahydrofolate + glycine + H2O = (6S)-5,6,7,8-tetrahydrofolate + L-serine. The protein operates within one-carbon metabolism; tetrahydrofolate interconversion. It participates in amino-acid biosynthesis; glycine biosynthesis; glycine from L-serine: step 1/1. Its function is as follows. Catalyzes the reversible interconversion of serine and glycine with tetrahydrofolate (THF) serving as the one-carbon carrier. This reaction serves as the major source of one-carbon groups required for the biosynthesis of purines, thymidylate, methionine, and other important biomolecules. Also exhibits THF-independent aldolase activity toward beta-hydroxyamino acids, producing glycine and aldehydes, via a retro-aldol mechanism. This Colwellia psychrerythraea (strain 34H / ATCC BAA-681) (Vibrio psychroerythus) protein is Serine hydroxymethyltransferase 2.